Consider the following 301-residue polypeptide: MSWIERIKSNIAPTRKASIPEGVWTKCDSCGQVLYRAELERNLEVCPKCDHHMRMSARNRLHSLLDEGTMVELGSELEPKDLLKFRDSKKYKDRIASAQKETGEKDALVVMKGTLHEMPVVAAAFEFSFMGGSMGSVVGARFIRAVEQALEDNCPLICFSASGGARMQEALMSLMQMAKTSAALGKMQERGLPYISVLTDPTMGGVSASFAMLGDLNIAEPKALIGFAGPRVIEQTVREKLPPGFQRSEFLIQKGAIDMIVRRPEMRLKLASVLAKLMNLPAPSPDEPRESVVVPDQEPEA.

Residues 23–292 (VWTKCDSCGQ…PSPDEPRESV (270 aa)) enclose the CoA carboxyltransferase N-terminal domain. 4 residues coordinate Zn(2+): Cys-27, Cys-30, Cys-46, and Cys-49. The segment at 27 to 49 (CDSCGQVLYRAELERNLEVCPKC) adopts a C4-type zinc-finger fold. The interval 280 to 301 (LPAPSPDEPRESVVVPDQEPEA) is disordered.

The protein belongs to the AccD/PCCB family. In terms of assembly, acetyl-CoA carboxylase is a heterohexamer composed of biotin carboxyl carrier protein (AccB), biotin carboxylase (AccC) and two subunits each of ACCase subunit alpha (AccA) and ACCase subunit beta (AccD). It depends on Zn(2+) as a cofactor.

The protein localises to the cytoplasm. It catalyses the reaction N(6)-carboxybiotinyl-L-lysyl-[protein] + acetyl-CoA = N(6)-biotinyl-L-lysyl-[protein] + malonyl-CoA. It functions in the pathway lipid metabolism; malonyl-CoA biosynthesis; malonyl-CoA from acetyl-CoA: step 1/1. Functionally, component of the acetyl coenzyme A carboxylase (ACC) complex. Biotin carboxylase (BC) catalyzes the carboxylation of biotin on its carrier protein (BCCP) and then the CO(2) group is transferred by the transcarboxylase to acetyl-CoA to form malonyl-CoA. This chain is Acetyl-coenzyme A carboxylase carboxyl transferase subunit beta, found in Enterobacter sp. (strain 638).